A 569-amino-acid polypeptide reads, in one-letter code: Proline--tRNA ligase (569 aa).

It belongs to the class-II aminoacyl-tRNA synthetase family. ProS type 1 subfamily. Homodimer.

Its subcellular location is the cytoplasm. It carries out the reaction tRNA(Pro) + L-proline + ATP = L-prolyl-tRNA(Pro) + AMP + diphosphate. In terms of biological role, catalyzes the attachment of proline to tRNA(Pro) in a two-step reaction: proline is first activated by ATP to form Pro-AMP and then transferred to the acceptor end of tRNA(Pro). As ProRS can inadvertently accommodate and process non-cognate amino acids such as alanine and cysteine, to avoid such errors it has two additional distinct editing activities against alanine. One activity is designated as 'pretransfer' editing and involves the tRNA(Pro)-independent hydrolysis of activated Ala-AMP. The other activity is designated 'posttransfer' editing and involves deacylation of mischarged Ala-tRNA(Pro). The misacylated Cys-tRNA(Pro) is not edited by ProRS. In Shewanella loihica (strain ATCC BAA-1088 / PV-4), this protein is Proline--tRNA ligase.